The following is a 499-amino-acid chain: Isoflavone 2'-hydroxylase (499 aa).

A heme-binding site is contributed by Cys436.

This sequence belongs to the cytochrome P450 family. Heme serves as cofactor.

The protein resides in the membrane. The enzyme catalyses a 2'-unsubstituted isoflavone + reduced [NADPH--hemoprotein reductase] + O2 = a 2'-hydroxyisoflavone + oxidized [NADPH--hemoprotein reductase] + H2O + H(+). Catalyzes the hydroxylation of isoflavones, daidzein and formononetin, to yield 2'-hydroxyisoflavones, 2'-hydroxydaidzein, and 2'-hydroxyformononetin, respectively. In Glycyrrhiza echinata (Licorice), this protein is Isoflavone 2'-hydroxylase (CYP81E1).